Here is a 184-residue protein sequence, read N- to C-terminus: Probable RNA 2'-phosphotransferase (184 aa).

The protein belongs to the KptA/TPT1 family.

Removes the 2'-phosphate from RNA via an intermediate in which the phosphate is ADP-ribosylated by NAD followed by a presumed transesterification to release the RNA and generate ADP-ribose 1''-2''-cyclic phosphate (APPR&gt;P). May function as an ADP-ribosylase. The sequence is that of Probable RNA 2'-phosphotransferase from Escherichia coli O9:H4 (strain HS).